A 290-amino-acid chain; its full sequence is Putative tyrosine recombinase TTE1313 (290 aa).

In terms of domain architecture, Core-binding (CB) spans 1-85 (MAESVVGEFL…SIKAFYHYLF (85 aa)). One can recognise a Tyr recombinase domain in the interval 106–290 (KEPVTLTVEQ…EVYNKFHPRA (185 aa)). Residue Arg239 is part of the active site. Tyr283 (O-(3'-phospho-DNA)-tyrosine intermediate) is an active-site residue.

The protein belongs to the 'phage' integrase family.

The protein resides in the cytoplasm. Functionally, site-specific tyrosine recombinase, which acts by catalyzing the cutting and rejoining of the recombining DNA molecules. This chain is Putative tyrosine recombinase TTE1313, found in Caldanaerobacter subterraneus subsp. tengcongensis (strain DSM 15242 / JCM 11007 / NBRC 100824 / MB4) (Thermoanaerobacter tengcongensis).